Reading from the N-terminus, the 1052-residue chain is Focal adhesion kinase 1 (1052 aa).

The tract at residues 1–27 (MAAAYLDPNLNHTPSSSTKTHLGTGME) is disordered. Ala2 carries the N-acetylalanine modification. Tyr5 is modified (phosphotyrosine). The span at 10–21 (LNHTPSSSTKTH) shows a compositional bias: polar residues. Thr13 carries the phosphothreonine modification. Ser29 and Ser54 each carry phosphoserine. The FERM domain occupies 35-355 (RVLKVFHYFE…GYCRLVNGAT (321 aa)). Lys152 is covalently cross-linked (Glycyl lysine isopeptide (Lys-Gly) (interchain with G-Cter in SUMO)). A phosphotyrosine mark is found at Tyr397 and Tyr407. Tyr397 carries the post-translational modification Phosphotyrosine; by autocatalysis. ATP-binding positions include 428 to 434 (IGEGQFG), Lys454, and 500 to 502 (ELC). Residues 431 to 680 (GQFGDVHQGV…ELKAQLSTIL (250 aa)) form the Protein kinase domain. The Proton acceptor role is filled by Asp546. Tyr570 carries the phosphotyrosine modification. Phosphotyrosine; by RET and SRC occurs at positions 576 and 577. Ser580 is modified (phosphoserine). Residues 685–697 (VQQEERMRMESRR) show a composition bias toward basic and acidic residues. Disordered regions lie at residues 685-734 (VQQE…PSPQ) and 837-921 (VRLS…DRSN). An interaction with TGFB1I1 region spans residues 707–1052 (GSDEAPPKPS…LKMLGQTRPH (346 aa)). Ser722 carries the post-translational modification Phosphoserine. The residue at position 732 (Ser732) is a Phosphoserine; by CDK5. The span at 837 to 849 (VRLSRGSIDREDG) shows a compositional bias: basic and acidic residues. Phosphoserine is present on Ser843. At Tyr861 the chain carries Phosphotyrosine. Residues 869–880 (PAAPPKKPPRPG) show a composition bias toward pro residues. Over residues 886–896 (SNLSSISSPAD) the composition is skewed to polar residues. Ser910 is modified (phosphoserine). Residues 912 to 1052 (PPTANLDRSN…LKMLGQTRPH (141 aa)) are interaction with ARHGEF28. Thr914 carries the post-translational modification Phosphothreonine. Tyr925 bears the Phosphotyrosine; by SRC mark.

The protein belongs to the protein kinase superfamily. Tyr protein kinase family. FAK subfamily. In terms of assembly, interacts with GIT1. Component of a complex that contains at least FER, CTTN and PTK2/FAK1. Interacts with BMX. Interacts with STEAP4. Interacts with ZFYVE21. Interacts with ESR1. Interacts with FGR, FLT4 and RET. Interacts with EPHA2 in resting cells; activation of EPHA2 recruits PTPN11, leading to dephosphorylation of PTK2/FAK1 and dissociation of the complex. Interacts with EPHA1 (kinase activity-dependent). Interacts with MISP. Interacts with PIAS1. Interacts with ARHGAP26 and SHC1. Interacts with RB1CC1; this inhibits PTK2/FAK1 activity and activation of downstream signaling pathways. Interacts with P53/TP53. Interacts with STAT1. Interacts with WASL. Interacts with ARHGEF7. Interacts with DCC. Interacts (via first Pro-rich region) with CAS family members (via SH3 domain), including BCAR1, BCAR3 and CASS4. Interacts with NEDD9 (via C-terminus). Interacts with SORBS1. Interacts with ARHGEF28. Interacts with SHB. Part of a complex composed of THSD1, PTK2/FAK1, TLN1 and VCL. Interacts with PXN and TLN1. Interacts with TGFB1I1. Interacts with PIK3R1 or PIK3R2. Interacts with SRC, GRB2 and GRB7. Interacts with LPXN (via LD motif 3). Interacts with CD36. Interacts with EMP2; regulates PTK2 activation and localization. Interacts with DSCAM. Interacts with AMBRA1. Interacts (when tyrosine-phosphorylated) with tensin TNS1; the interaction is increased by phosphorylation of TNS1. Post-translationally, phosphorylated on tyrosine residues upon activation, e.g. upon integrin signaling. Tyr-397 is the major autophosphorylation site, but other kinases can also phosphorylate this residue. Phosphorylation at Tyr-397 promotes interaction with SRC and SRC family members, leading to phosphorylation at Tyr-576, Tyr-577 and at additional tyrosine residues. FGR promotes phosphorylation at Tyr-397 and Tyr-576. FER promotes phosphorylation at Tyr-577, Tyr-861 and Tyr-925, even when cells are not adherent. Tyr-397, Tyr-576 and Ser-722 are phosphorylated only when cells are adherent. Phosphorylation at Tyr-397 is important for interaction with BMX, PIK3R1 and SHC1. Phosphorylation at Tyr-925 is important for interaction with GRB2. Dephosphorylated by PTPN11; PTPN11 is recruited to PTK2 via EPHA2 (tyrosine phosphorylated). Microtubule-induced dephosphorylation at Tyr-397 is crucial for the induction of focal adhesion disassembly; this dephosphorylation could be catalyzed by PTPN11 and regulated by ZFYVE21. Phosphorylation on tyrosine residues is enhanced by NTN1. Sumoylated; this enhances autophosphorylation.

It localises to the cell junction. The protein resides in the focal adhesion. Its subcellular location is the cell membrane. It is found in the cytoplasm. The protein localises to the perinuclear region. It localises to the cell cortex. The protein resides in the cytoskeleton. Its subcellular location is the microtubule organizing center. It is found in the centrosome. The protein localises to the nucleus. It localises to the cilium basal body. It carries out the reaction L-tyrosyl-[protein] + ATP = O-phospho-L-tyrosyl-[protein] + ADP + H(+). Its activity is regulated as follows. Subject to autoinhibition, mediated by interactions between the FERM domain and the kinase domain. Activated by autophosphorylation at Tyr-397. This promotes interaction with SRC and phosphorylation at Tyr-576 and Tyr-577 in the kinase activation loop by SRC. Phosphorylation at Tyr-397, Tyr-576 and Tyr-577 is required for maximal kinase activity. In terms of biological role, non-receptor protein-tyrosine kinase that plays an essential role in regulating cell migration, adhesion, spreading, reorganization of the actin cytoskeleton, formation and disassembly of focal adhesions and cell protrusions, cell cycle progression, cell proliferation and apoptosis. Required for early embryonic development and placenta development. Required for embryonic angiogenesis, normal cardiomyocyte migration and proliferation, and normal heart development. Regulates axon growth and neuronal cell migration, axon branching and synapse formation; required for normal development of the nervous system. Plays a role in osteogenesis and differentiation of osteoblasts. Functions in integrin signal transduction, but also in signaling downstream of numerous growth factor receptors, G-protein coupled receptors (GPCR), EPHA2, netrin receptors and LDL receptors. Forms multisubunit signaling complexes with SRC and SRC family members upon activation; this leads to the phosphorylation of additional tyrosine residues, creating binding sites for scaffold proteins, effectors and substrates. Regulates numerous signaling pathways. Promotes activation of phosphatidylinositol 3-kinase and the AKT1 signaling cascade. Promotes activation of MAPK1/ERK2, MAPK3/ERK1 and the MAP kinase signaling cascade. Promotes localized and transient activation of guanine nucleotide exchange factors (GEFs) and GTPase-activating proteins (GAPs), and thereby modulates the activity of Rho family GTPases. Signaling via CAS family members mediates activation of RAC1. Phosphorylates NEDD9 following integrin stimulation. Recruits the ubiquitin ligase MDM2 to P53/TP53 in the nucleus, and thereby regulates P53/TP53 activity, P53/TP53 ubiquitination and proteasomal degradation. Phosphorylates SRC; this increases SRC kinase activity. Phosphorylates ACTN1, ARHGEF7, GRB7, RET and WASL. Promotes phosphorylation of PXN and STAT1; most likely PXN and STAT1 are phosphorylated by a SRC family kinase that is recruited to autophosphorylated PTK2/FAK1, rather than by PTK2/FAK1 itself. Promotes phosphorylation of BCAR1; GIT2 and SHC1; this requires both SRC and PTK2/FAK1. Promotes phosphorylation of BMX and PIK3R1. Its function is as follows. Does not contain a kinase domain and inhibits PTK2/FAK1 phosphorylation and signaling. Its enhanced expression can attenuate the nuclear accumulation of LPXN and limit its ability to enhance serum response factor (SRF)-dependent gene transcription. The chain is Focal adhesion kinase 1 from Mus musculus (Mouse).